Here is a 368-residue protein sequence, read N- to C-terminus: 1-deoxy-D-xylulose 5-phosphate reductoisomerase (368 aa).

Residues threonine 10, glycine 11, serine 12, isoleucine 13, glutamine 38, and asparagine 100 each coordinate NADPH. Lysine 101 contributes to the 1-deoxy-D-xylulose 5-phosphate binding site. NADPH is bound at residue glutamate 102. A Mn(2+)-binding site is contributed by aspartate 125. 4 residues coordinate 1-deoxy-D-xylulose 5-phosphate: serine 126, glutamate 127, serine 151, and histidine 172. Residue glutamate 127 coordinates Mn(2+). Glycine 178 contacts NADPH. Residues serine 185, asparagine 190, lysine 191, and glutamate 194 each contribute to the 1-deoxy-D-xylulose 5-phosphate site. Position 194 (glutamate 194) interacts with Mn(2+).

It belongs to the DXR family. The cofactor is Mg(2+). Requires Mn(2+) as cofactor.

It catalyses the reaction 2-C-methyl-D-erythritol 4-phosphate + NADP(+) = 1-deoxy-D-xylulose 5-phosphate + NADPH + H(+). It functions in the pathway isoprenoid biosynthesis; isopentenyl diphosphate biosynthesis via DXP pathway; isopentenyl diphosphate from 1-deoxy-D-xylulose 5-phosphate: step 1/6. Its function is as follows. Catalyzes the NADPH-dependent rearrangement and reduction of 1-deoxy-D-xylulose-5-phosphate (DXP) to 2-C-methyl-D-erythritol 4-phosphate (MEP). In Tropheryma whipplei (strain Twist) (Whipple's bacillus), this protein is 1-deoxy-D-xylulose 5-phosphate reductoisomerase.